The sequence spans 128 residues: Iron-sulfur cluster insertion protein ErpA (128 aa).

Positions 56, 120, and 122 each coordinate iron-sulfur cluster.

Belongs to the HesB/IscA family. Homodimer. The cofactor is iron-sulfur cluster.

In terms of biological role, required for insertion of 4Fe-4S clusters for at least IspG. The chain is Iron-sulfur cluster insertion protein ErpA from Xanthomonas euvesicatoria pv. vesicatoria (strain 85-10) (Xanthomonas campestris pv. vesicatoria).